A 649-amino-acid polypeptide reads, in one-letter code: MSSRKQARLEAKNFIDSLSVQPYPNSKKAYIQGSREDIQVPVREISLADSLVGGTKKEPVFEPNVPIQVYDTSGVYTDPTHQIDLYSGLPKLREQWIDERGDTELLDDVSSVYTKERLEDETLDDLRYGNLPRIRRATDEQCVTQLHYARQGIITPEMEYIAIRENMGRQKFADEQLNHQHPGHNFGANLPKEITPEFVRKEVAEGRAIIPSNINHPESEPMIIGRNFLVKVNANIGNSSVSSSIEEEVEKLVWSTRWGGDTVMDLSTGRNIHETREWILRNSPVPIGTVPMYQALEKVNGVAEDLNWEVMRDTLIEQAEQGVDYFTIHAGLLLRYVPMTAKRVTGIVSRGGSIIAKWCLAHHQESFLYTHFREICEICAKYDVALSLGDGLRPGSIADANDEAQFSELRTLGELTKVAWEYDVQVIIEGPGHVPMHLIKENMDEQLEHCHEAPFYTLGPLTTDIAPGYDHITSGIGAAMIGWYGCAMLCYVTPKEHLGLPNKEDVKTGLITYKLAAHAADLAKGHPGAQIRDNALSKARFEFRWEDQFNLALDPETARSFHDETLPQESGKVAHFCSMCGPKFCSMKISQEVREYAKDTEQVAADQAIEIKMLDNPLEGMRQKSQEFRDTGSELYHPAVGAKEAQLEE.

Residues Asn235, Met264, Tyr293, His329, 349–351 (SRG), 390–393 (DGLR), and Glu429 contribute to the substrate site. Residue His433 coordinates Zn(2+). Residue Tyr456 coordinates substrate. Residue His497 coordinates Zn(2+). Positions 577, 580, and 585 each coordinate [4Fe-4S] cluster. The tract at residues 620–649 (GMRQKSQEFRDTGSELYHPAVGAKEAQLEE) is disordered. Basic and acidic residues predominate over residues 621-632 (MRQKSQEFRDTG).

Belongs to the ThiC family. As to quaternary structure, homodimer. Requires [4Fe-4S] cluster as cofactor.

The catalysed reaction is 5-amino-1-(5-phospho-beta-D-ribosyl)imidazole + S-adenosyl-L-methionine = 4-amino-2-methyl-5-(phosphooxymethyl)pyrimidine + CO + 5'-deoxyadenosine + formate + L-methionine + 3 H(+). It participates in cofactor biosynthesis; thiamine diphosphate biosynthesis. In terms of biological role, catalyzes the synthesis of the hydroxymethylpyrimidine phosphate (HMP-P) moiety of thiamine from aminoimidazole ribotide (AIR) in a radical S-adenosyl-L-methionine (SAM)-dependent reaction. This is Phosphomethylpyrimidine synthase from Vibrio atlanticus (strain LGP32) (Vibrio splendidus (strain Mel32)).